Reading from the N-terminus, the 178-residue chain is MSRIGNKVIVLPAGVELANNDNVVTVKGPKGELTREFSKDIEIRVEGTEITLHRPNDSKEMKTIHGTTRALLNNMVVGVSEGFKKELEMRGVGYRAQLQGSKLVLAVGKSHPDEVEAPEGITFELPNPTTIVVSGISKEVVGQTAAYVRSLRSPEPYKGKGIRYVGEFVRRKEGKTGK.

The protein belongs to the universal ribosomal protein uL6 family. As to quaternary structure, part of the 50S ribosomal subunit.

This protein binds to the 23S rRNA, and is important in its secondary structure. It is located near the subunit interface in the base of the L7/L12 stalk, and near the tRNA binding site of the peptidyltransferase center. This chain is Large ribosomal subunit protein uL6, found in Streptococcus pneumoniae (strain ATCC 700669 / Spain 23F-1).